A 351-amino-acid polypeptide reads, in one-letter code: MTIAVGRAPSRGWFDVLDDWLKRDRFVFVGWSGILLFPCAFLALGGWLTGTTFVTSWYTHGLASSYLEGANFLTVAVSTPADSMGHSLLLLWGPEAQGDLTRWFQLGGLWPFVALHGAFGLIGFMLRQFEIARLVGIRPYNALAFSAPIAVFVSVFLMYPLGQSSWFFAPSFGVAAIFRFLLFLQGFHNWTLNPFHMMGVAGVLGGALLCAIHGATVENTLFEDGDGANTFRAFNPTQSEETYSMVTANRFWSQIFGIAFSNKRWLHFFMLFVPVTGLWMSAVGIVGLALNLRAYDFVSQELRAAEDPEFETFYTKNILLNEGIRAWMAPQDQPHEQFVFPEEVLPRGNAL.

The chain crosses the membrane as a helical span at residues 39-59 (CAFLALGGWLTGTTFVTSWYT). A chlorophyll a-binding site is contributed by His116. A helical transmembrane segment spans residues 123 to 139 (GFMLRQFEIARLVGIRP). Residues Gln128 and Asn141 each contribute to the pheophytin a site. The helical transmembrane segment at 151-164 (VFVSVFLMYPLGQS) threads the bilayer. A chlorophyll a-binding site is contributed by His196. The helical transmembrane segment at 206 to 226 (GALLCAIHGATVENTLFEDGD) threads the bilayer. The a plastoquinone site is built by His213 and Phe260. His213 is a Fe cation binding site. His267 is a Fe cation binding site. The chain crosses the membrane as a helical span at residues 277–293 (GLWMSAVGIVGLALNLR).

The protein belongs to the reaction center PufL/M/PsbA/D family. PSII is composed of 1 copy each of membrane proteins PsbA, PsbB, PsbC, PsbD, PsbE, PsbF, PsbH, PsbI, PsbJ, PsbK, PsbL, PsbM, PsbT, PsbX, PsbY, PsbZ, Psb30/Ycf12, peripheral proteins PsbO, CyanoQ (PsbQ), PsbU, PsbV and a large number of cofactors. It forms dimeric complexes. Requires The D1/D2 heterodimer binds P680, chlorophylls that are the primary electron donor of PSII, and subsequent electron acceptors. It shares a non-heme iron and each subunit binds pheophytin, quinone, additional chlorophylls, carotenoids and lipids. There is also a Cl(-1) ion associated with D1 and D2, which is required for oxygen evolution. The PSII complex binds additional chlorophylls, carotenoids and specific lipids. as cofactor.

It is found in the cellular thylakoid membrane. The enzyme catalyses 2 a plastoquinone + 4 hnu + 2 H2O = 2 a plastoquinol + O2. Its function is as follows. Photosystem II (PSII) is a light-driven water:plastoquinone oxidoreductase that uses light energy to abstract electrons from H(2)O, generating O(2) and a proton gradient subsequently used for ATP formation. It consists of a core antenna complex that captures photons, and an electron transfer chain that converts photonic excitation into a charge separation. The D1/D2 (PsbA/PsbD) reaction center heterodimer binds P680, the primary electron donor of PSII as well as several subsequent electron acceptors. D2 is needed for assembly of a stable PSII complex. The chain is Photosystem II D2 protein from Nostoc punctiforme (strain ATCC 29133 / PCC 73102).